Consider the following 123-residue polypeptide: Putative iron-sulfur cluster insertion protein ErpA (123 aa).

Residues Cys-51, Cys-115, and Cys-117 each contribute to the iron-sulfur cluster site.

The protein belongs to the HesB/IscA family. In terms of assembly, homodimer. It depends on iron-sulfur cluster as a cofactor.

Its function is as follows. Required for insertion of 4Fe-4S clusters. This is Putative iron-sulfur cluster insertion protein ErpA from Burkholderia ambifaria (strain ATCC BAA-244 / DSM 16087 / CCUG 44356 / LMG 19182 / AMMD) (Burkholderia cepacia (strain AMMD)).